A 424-amino-acid chain; its full sequence is NADH-quinone oxidoreductase subunit H (424 aa).

A run of 9 helical transmembrane segments spans residues 11 to 31, 79 to 99, 119 to 139, 160 to 180, 193 to 213, 255 to 275, 283 to 303, 317 to 337, and 347 to 367; these read LVVA…LVAI, FVYF…FAFI, LPVA…GIVL, VISY…YAGS, VWYI…MVGE, VSAL…PLNL, WWPV…YFWL, ALGW…AAVI, and YWTP…VMSL. The segment at 376–424 is disordered; that stretch reads AVTKARRRGKQPAAGPDEQGALEPLFPTPPLPMKPLAQPVGASKENARG.

Belongs to the complex I subunit 1 family. NDH-1 is composed of 14 different subunits. Subunits NuoA, H, J, K, L, M, N constitute the membrane sector of the complex.

It localises to the cell membrane. The enzyme catalyses a quinone + NADH + 5 H(+)(in) = a quinol + NAD(+) + 4 H(+)(out). NDH-1 shuttles electrons from NADH, via FMN and iron-sulfur (Fe-S) centers, to quinones in the respiratory chain. The immediate electron acceptor for the enzyme in this species is believed to be menaquinone. Couples the redox reaction to proton translocation (for every two electrons transferred, four hydrogen ions are translocated across the cytoplasmic membrane), and thus conserves the redox energy in a proton gradient. This subunit may bind ubiquinone. This Mycobacterium ulcerans (strain Agy99) protein is NADH-quinone oxidoreductase subunit H.